A 451-amino-acid polypeptide reads, in one-letter code: Tubulin alpha chain (451 aa).

Gln11 contacts GTP. Position 40 is an N6-acetyllysine (Lys40). Glu71, Ser140, Gly144, Thr145, Thr179, Asn206, and Asn228 together coordinate GTP. Glu71 serves as a coordination point for Mg(2+). Glu254 is an active-site residue.

Belongs to the tubulin family. Dimer of alpha and beta chains. A typical microtubule is a hollow water-filled tube with an outer diameter of 25 nm and an inner diameter of 15 nM. Alpha-beta heterodimers associate head-to-tail to form protofilaments running lengthwise along the microtubule wall with the beta-tubulin subunit facing the microtubule plus end conferring a structural polarity. Microtubules usually have 13 protofilaments but different protofilament numbers can be found in some organisms and specialized cells. Mg(2+) serves as cofactor. In terms of processing, undergoes a tyrosination/detyrosination cycle, the cyclic removal and re-addition of a C-terminal tyrosine residue by the enzymes tubulin tyrosine carboxypeptidase (TTCP) and tubulin tyrosine ligase (TTL), respectively. Acetylation of alpha chains at Lys-40 stabilizes microtubules and affects affinity and processivity of microtubule motors. This modification has a role in multiple cellular functions, ranging from cell motility, cell cycle progression or cell differentiation to intracellular trafficking and signaling. As to expression, actively expressed in the lens but does not seem to be lens-specific.

The protein resides in the cytoplasm. It is found in the cytoskeleton. It carries out the reaction GTP + H2O = GDP + phosphate + H(+). Its function is as follows. Tubulin is the major constituent of microtubules, a cylinder consisting of laterally associated linear protofilaments composed of alpha- and beta-tubulin heterodimers. Microtubules grow by the addition of GTP-tubulin dimers to the microtubule end, where a stabilizing cap forms. Below the cap, tubulin dimers are in GDP-bound state, owing to GTPase activity of alpha-tubulin. This chain is Tubulin alpha chain, found in Enteroctopus dofleini (North Pacific giant octopus).